The chain runs to 579 residues: Polyadenylate-binding protein, cytoplasmic and nuclear (579 aa).

Basic and acidic residues predominate over residues Met-1–Glu-10. A disordered region spans residues Met-1–Thr-32. 4 consecutive RRM domains span residues Ala-35–Arg-113, Gly-123–Ser-200, Thr-216–Lys-293, and Ile-319–Arg-396. A PABC domain is found at Gly-487–Gln-566. The disordered stretch occupies residues Ala-560–Ala-579. A compositionally biased stretch (low complexity) spans Gln-566 to Ala-579.

This sequence belongs to the polyadenylate-binding protein type-1 family.

It localises to the cytoplasm. Its subcellular location is the nucleus. Functionally, binds the poly(A) tail of mRNA. Appears to be an important mediator of the multiple roles of the poly(A) tail in mRNA biogenesis, stability and translation. In the nucleus, involved in both mRNA cleavage and polyadenylation. Is also required for efficient mRNA export to the cytoplasm. Acts in concert with a poly(A)-specific nuclease (PAN) to affect poly(A) tail shortening, which may occur concomitantly with either nucleocytoplasmic mRNA transport or translational initiation. In the cytoplasm, stimulates translation initiation and regulates mRNA decay through translation termination-coupled poly(A) shortening, probably mediated by PAN. The protein is Polyadenylate-binding protein, cytoplasmic and nuclear (PAB1) of Candida glabrata (strain ATCC 2001 / BCRC 20586 / JCM 3761 / NBRC 0622 / NRRL Y-65 / CBS 138) (Yeast).